A 493-amino-acid chain; its full sequence is tRNA-2-methylthio-N(6)-dimethylallyladenosine synthase (493 aa).

Positions 1–14 are enriched in polar residues; that stretch reads MPMTGLLQTTLSTA. A disordered region spans residues 1-31; that stretch reads MPMTGLLQTTLSTADQDRSGPAATTGDTPAR. Residues 35-155 form the MTTase N-terminal domain; sequence KRLHVITWGC…LGGMVRRAMN (121 aa). [4Fe-4S] cluster-binding residues include Cys-44, Cys-80, Cys-118, Cys-199, Cys-203, and Cys-206. The Radical SAM core domain maps to 185–417; the sequence is LAGGRTAFLT…QALLRTQQEA (233 aa). Residues 420-482 enclose the TRAM domain; the sequence is TACIGKTVNV…TNSLSATLPD (63 aa).

It belongs to the methylthiotransferase family. MiaB subfamily. As to quaternary structure, monomer. [4Fe-4S] cluster serves as cofactor.

It localises to the cytoplasm. It catalyses the reaction N(6)-dimethylallyladenosine(37) in tRNA + (sulfur carrier)-SH + AH2 + 2 S-adenosyl-L-methionine = 2-methylsulfanyl-N(6)-dimethylallyladenosine(37) in tRNA + (sulfur carrier)-H + 5'-deoxyadenosine + L-methionine + A + S-adenosyl-L-homocysteine + 2 H(+). In terms of biological role, catalyzes the methylthiolation of N6-(dimethylallyl)adenosine (i(6)A), leading to the formation of 2-methylthio-N6-(dimethylallyl)adenosine (ms(2)i(6)A) at position 37 in tRNAs that read codons beginning with uridine. In Granulibacter bethesdensis (strain ATCC BAA-1260 / CGDNIH1), this protein is tRNA-2-methylthio-N(6)-dimethylallyladenosine synthase.